We begin with the raw amino-acid sequence, 176 residues long: Nudix hydrolase 18, mitochondrial (176 aa).

Residues 1-21 (MVCLVSRTGRQSQRYNKGRRQ) constitute a mitochondrion transit peptide. A Nudix hydrolase domain is found at 22-153 (VVGCIPYRLK…WMKEALDVLV (132 aa)). Positions 60 to 81 (GGWELDESVEEAASRESLEEAG) match the Nudix box motif. The Mg(2+) site is built by Glu75 and Glu79.

The protein belongs to the Nudix hydrolase family. The cofactor is Mg(2+). Requires Mn(2+) as cofactor. Expressed in roots, stems and inflorescences.

Its subcellular location is the mitochondrion. Its function is as follows. Probably mediates the hydrolysis of some nucleoside diphosphate derivatives. The protein is Nudix hydrolase 18, mitochondrial (NUDT18) of Arabidopsis thaliana (Mouse-ear cress).